A 421-amino-acid polypeptide reads, in one-letter code: Inner membrane protein YihN (421 aa).

Residues M1–Q44 lie on the Periplasmic side of the membrane. A helical transmembrane segment spans residues I45 to Y65. At F66–R73 the chain is on the cytoplasmic side. The helical transmembrane segment at Y74–T91 threads the bilayer. Residues T92 to G95 lie on the Periplasmic side of the membrane. The chain crosses the membrane as a helical span at residues Y96–L118. Topologically, residues L119–D146 are cytoplasmic. A helical membrane pass occupies residues T147 to F167. K168 is a topological domain (periplasmic). The helical transmembrane segment at A169 to L189 threads the bilayer. Over N190–T220 the chain is Cytoplasmic. Transmembrane regions (helical) follow at residues I221–F241 and I242–I262. At N263–K288 the chain is on the cytoplasmic side. 2 helical membrane-spanning segments follow: residues Y289–H309 and E310–T330. Topologically, residues Q331–A354 are cytoplasmic. A helical transmembrane segment spans residues L355–L375. Residues D376–K385 are Periplasmic-facing. A helical membrane pass occupies residues I386 to V406. Topologically, residues K407–A421 are cytoplasmic.

It belongs to the major facilitator superfamily.

It localises to the cell inner membrane. This Escherichia coli (strain K12) protein is Inner membrane protein YihN (yihN).